Here is a 308-residue protein sequence, read N- to C-terminus: tRNA dimethylallyltransferase (308 aa).

10-17 is a binding site for ATP; the sequence is GPTASGKT. 12–17 contacts substrate; that stretch reads TASGKT. Interaction with substrate tRNA stretches follow at residues 35–38 and 159–163; these read DSSL and QRIFR.

This sequence belongs to the IPP transferase family. In terms of assembly, monomer. Requires Mg(2+) as cofactor.

The catalysed reaction is adenosine(37) in tRNA + dimethylallyl diphosphate = N(6)-dimethylallyladenosine(37) in tRNA + diphosphate. Catalyzes the transfer of a dimethylallyl group onto the adenine at position 37 in tRNAs that read codons beginning with uridine, leading to the formation of N6-(dimethylallyl)adenosine (i(6)A). The polypeptide is tRNA dimethylallyltransferase (Francisella tularensis subsp. novicida (strain U112)).